Consider the following 256-residue polypeptide: Imidazole glycerol phosphate synthase subunit HisF (256 aa).

Active-site residues include D12 and D131.

It belongs to the HisA/HisF family. As to quaternary structure, heterodimer of HisH and HisF.

It is found in the cytoplasm. The enzyme catalyses 5-[(5-phospho-1-deoxy-D-ribulos-1-ylimino)methylamino]-1-(5-phospho-beta-D-ribosyl)imidazole-4-carboxamide + L-glutamine = D-erythro-1-(imidazol-4-yl)glycerol 3-phosphate + 5-amino-1-(5-phospho-beta-D-ribosyl)imidazole-4-carboxamide + L-glutamate + H(+). It functions in the pathway amino-acid biosynthesis; L-histidine biosynthesis; L-histidine from 5-phospho-alpha-D-ribose 1-diphosphate: step 5/9. IGPS catalyzes the conversion of PRFAR and glutamine to IGP, AICAR and glutamate. The HisF subunit catalyzes the cyclization activity that produces IGP and AICAR from PRFAR using the ammonia provided by the HisH subunit. This chain is Imidazole glycerol phosphate synthase subunit HisF, found in Ectopseudomonas mendocina (strain ymp) (Pseudomonas mendocina).